The primary structure comprises 38 residues: Plastocyanin (38 aa).

The 38-residue stretch at Ala1–Val38 folds into the Plastocyanin-like domain. His25 lines the Cu cation pocket.

The protein belongs to the plastocyanin family. Requires Cu(2+) as cofactor.

Its subcellular location is the plastid. It localises to the chloroplast thylakoid membrane. Participates in electron transfer between P700 and the cytochrome b6-f complex in photosystem I. This Thalassiosira oceanica (Marine diatom) protein is Plastocyanin (PETE).